A 324-amino-acid polypeptide reads, in one-letter code: MRHDYRMSEVEVAGGTAPVLRGRFLYNEPMSRHVSWRAGGSARRLYVPADLEDLVWLVRSVPADEAIHMVGLGSNLLVRDGGVAGVVILLHGVLTKLALESRTHGLPPAPPARDTAVVYAQAGVASPKLARFAATHGLVGGEFLAGIPGTVGGAIAMNAGCYGSETWDTLVQLHTLDRQGQLNERLPEEYVTGYRHAALKRPHEEWFIGGWFRLERGDGAASRERIRSLLKTRIASQPLNLPNAGSVFRNPPGDFAARLIEACGLKGHRIGDAQVSTKHANFIVNVGKATATDIERLIEHVEDSVEARTNVRLMREVRIIGERQ.

The FAD-binding PCMH-type domain occupies 38–231 (AGGSARRLYV…SRERIRSLLK (194 aa)). Arg195 is an active-site residue. The Proton donor role is filled by Ser246. Residue Glu316 is part of the active site.

Belongs to the MurB family. Requires FAD as cofactor.

Its subcellular location is the cytoplasm. The enzyme catalyses UDP-N-acetyl-alpha-D-muramate + NADP(+) = UDP-N-acetyl-3-O-(1-carboxyvinyl)-alpha-D-glucosamine + NADPH + H(+). Its pathway is cell wall biogenesis; peptidoglycan biosynthesis. Cell wall formation. The chain is UDP-N-acetylenolpyruvoylglucosamine reductase from Thiobacillus denitrificans (strain ATCC 25259 / T1).